The primary structure comprises 396 residues: Acetate kinase (396 aa).

N7 is a binding site for Mg(2+). K14 contributes to the ATP binding site. R91 is a substrate binding site. D148 acts as the Proton donor/acceptor in catalysis. Residues 208–212 (HLGNG), 283–285 (DFR), and 331–335 (GLGEN) contribute to the ATP site. Position 384 (E384) interacts with Mg(2+).

The protein belongs to the acetokinase family. As to quaternary structure, homodimer. Mg(2+) is required as a cofactor. The cofactor is Mn(2+).

The protein localises to the cytoplasm. It catalyses the reaction acetate + ATP = acetyl phosphate + ADP. It participates in metabolic intermediate biosynthesis; acetyl-CoA biosynthesis; acetyl-CoA from acetate: step 1/2. Catalyzes the formation of acetyl phosphate from acetate and ATP. Can also catalyze the reverse reaction. This is Acetate kinase from Alkaliphilus metalliredigens (strain QYMF).